A 629-amino-acid chain; its full sequence is 1-deoxy-D-xylulose-5-phosphate synthase (629 aa).

Thiamine diphosphate contacts are provided by residues His72 and 113–115; that span reads GHA. Asp144 contacts Mg(2+). Thiamine diphosphate-binding positions include 145–146, Asn174, Tyr287, and Glu370; that span reads GA. Asn174 contributes to the Mg(2+) binding site.

It belongs to the transketolase family. DXPS subfamily. As to quaternary structure, homodimer. Mg(2+) serves as cofactor. Requires thiamine diphosphate as cofactor.

It carries out the reaction D-glyceraldehyde 3-phosphate + pyruvate + H(+) = 1-deoxy-D-xylulose 5-phosphate + CO2. It functions in the pathway metabolic intermediate biosynthesis; 1-deoxy-D-xylulose 5-phosphate biosynthesis; 1-deoxy-D-xylulose 5-phosphate from D-glyceraldehyde 3-phosphate and pyruvate: step 1/1. Its function is as follows. Catalyzes the acyloin condensation reaction between C atoms 2 and 3 of pyruvate and glyceraldehyde 3-phosphate to yield 1-deoxy-D-xylulose-5-phosphate (DXP). This chain is 1-deoxy-D-xylulose-5-phosphate synthase, found in Prochlorococcus marinus (strain MIT 9312).